Reading from the N-terminus, the 486-residue chain is Heme A synthase COX15 (486 aa).

A mitochondrion-targeting transit peptide spans 1-33; the sequence is MLFRNIEVGRQAAKLLTRTSSRLAWQSIGASRN. Residues 34-85 are Mitochondrial matrix-facing; the sequence is ISTIRQQIRKTQLYNFKKTVSIRPFSLSSPVFKPHVASESNPIESRLKTSKN. The helical transmembrane segment at 86–106 threads the bilayer; sequence VAYWLIGTSGLVFGIVVLGGL. Residues 107–170 are Mitochondrial intermembrane-facing; sequence TRLTESGLSI…FIFFMEWIHR (64 aa). H169 lines the heme o pocket. A helical membrane pass occupies residues 171 to 191; it reads LWGRAIGAVFILPAVYFAVSK. Topologically, residues 192-200 are mitochondrial matrix; it reads KTSGHVNKR. The helical transmembrane segment at 201–221 threads the bilayer; that stretch reads LFGLAGLLGLQGFVGWWMVKS. Topologically, residues 222-243 are mitochondrial intermembrane; the sequence is GLDQEQLDARKSKPTVSQYRLT. A helical transmembrane segment spans residues 244-264; sequence THLGTAFFLYMGMLWTGLEIL. Heme o is bound at residue H245. The Mitochondrial matrix segment spans residues 265 to 293; that stretch reads RECKWIKNPVQAISLFKKLDNPAIGPMRK. The helical transmembrane segment at 294-314 threads the bilayer; sequence ISLALLAVSFLTAMSGGMVAG. The Mitochondrial intermembrane portion of the chain corresponds to 315-364; the sequence is LDAGWVYNTWPKMGERWFPSSRELMDENFCRREDKKDLWWRNLLENPVTV. The chain crosses the membrane as a helical span at residues 365–387; that stretch reads QLVHRTCAYVAFTSVLAAHMYAI. H368 is a heme b binding site. The Mitochondrial matrix segment spans residues 388 to 402; that stretch reads KKKAVIPRNAMTSLH. A helical transmembrane segment spans residues 403–423; that stretch reads VMMGVVTLQATLGILTILYLV. Residue P424 is a topological domain, mitochondrial intermembrane. Residues 425–445 form a helical membrane-spanning segment; that stretch reads ISLASIHQAGALALLTSSLVF. Heme b is bound at residue H431. Topologically, residues 446–486 are mitochondrial matrix; sequence ASQLRKPRAPMRNVIITLPHSSKVTSGKILSEASKLASKPL.

This sequence belongs to the COX15/CtaA family. Type 2 subfamily. In terms of assembly, forms 200-350 kDa oligomeric complexes independent on heme binding. In addition to form homooligomeric complexes, a portion also associates with the mitochondrial respiratory supercomplexes. Interacts with CcO assembly factors PET117, SHY1, COA3 and COA1, CcO subunit COX13 and cytochrome b-c1 subunit COR1. Heme b is required as a cofactor.

The protein localises to the mitochondrion inner membrane. It carries out the reaction Fe(II)-heme o + 2 A + H2O = Fe(II)-heme a + 2 AH2. It participates in porphyrin-containing compound metabolism; heme A biosynthesis; heme A from heme O: step 1/1. Functionally, catalyzes the second reaction in the biosynthesis of heme A, a prosthetic group of mitochondrial cytochrome c oxidase (CcO). Heme A is synthesized from heme B by two sequential enzymatic reactions catalyzed by heme O synthase (HOS/COX10) and heme A synthase (HAS/COX15). HAS catalyzes the conversion of heme O to heme A by two successive hydroxylations of the methyl group at C8, in a reaction that involves matrix ferredoxin YAH1 and ferredoxin reductase ARH1. The first hydroxylation forms heme I, the second hydroxylation results in an unstable dihydroxymethyl group, which spontaneously dehydrates, resulting in the formyl group of heme A. May also play a secondary role in CcO assembly. Plays a role in the maturation of COX1, the heme A-containing structural CcO subunit, possibly by interacting with the COX1-containing sub-assembly complexes that form prior to heme A insertion. May also positively regulate the upstream enzymatic reaction, farnesylation of heme B by HOS/COX10. In Saccharomyces cerevisiae (strain ATCC 204508 / S288c) (Baker's yeast), this protein is Heme A synthase COX15.